The chain runs to 292 residues: 4-hydroxy-tetrahydrodipicolinate synthase 2 (292 aa).

T46 provides a ligand contact to pyruvate. The active-site Proton donor/acceptor is the Y134. The active-site Schiff-base intermediate with substrate is the K162. V204 is a binding site for pyruvate.

It belongs to the DapA family. Homotetramer; dimer of dimers.

It is found in the cytoplasm. It catalyses the reaction L-aspartate 4-semialdehyde + pyruvate = (2S,4S)-4-hydroxy-2,3,4,5-tetrahydrodipicolinate + H2O + H(+). Its pathway is amino-acid biosynthesis; L-lysine biosynthesis via DAP pathway; (S)-tetrahydrodipicolinate from L-aspartate: step 3/4. In terms of biological role, catalyzes the condensation of (S)-aspartate-beta-semialdehyde [(S)-ASA] and pyruvate to 4-hydroxy-tetrahydrodipicolinate (HTPA). This Halalkalibacterium halodurans (strain ATCC BAA-125 / DSM 18197 / FERM 7344 / JCM 9153 / C-125) (Bacillus halodurans) protein is 4-hydroxy-tetrahydrodipicolinate synthase 2.